The primary structure comprises 337 residues: Protein RETICULATA-RELATED 3, chloroplastic (337 aa).

A chloroplast-targeting transit peptide spans 1–59 (MAAMAAKLQLSAKSDQSSVRLPRVINLSRDPTTRVSFPRNGSVCSLHTNFSSPHLAKPC). Positions 70 to 89 (NNGGGSGSGGGGGGFGGSGG) are enriched in gly residues. The segment at 70 to 96 (NNGGGSGSGGGGGGFGGSGGEASEESS) is disordered. Transmembrane regions (helical) follow at residues 151-171 (FVFS…YMLA) and 216-236 (VFAS…NGLI).

It belongs to the RETICULATA family. Expressed in root meristem, root vasculature, distal region of young leaf primordia, leaf bundle sheath cells, hydathodes and pollen grains.

Its subcellular location is the plastid. It localises to the chloroplast membrane. Functionally, may play a role in leaf development. Required for leaf mesophyll cell division in the early stages of leaf organogenesis. The chain is Protein RETICULATA-RELATED 3, chloroplastic from Arabidopsis thaliana (Mouse-ear cress).